Reading from the N-terminus, the 199-residue chain is Probable thymidylate kinase (199 aa).

Residue 9–16 (GIDGCGKT) participates in ATP binding.

This sequence belongs to the thymidylate kinase family.

The enzyme catalyses dTMP + ATP = dTDP + ADP. The chain is Probable thymidylate kinase from Methanococcus maripaludis (strain C6 / ATCC BAA-1332).